The sequence spans 249 residues: Putative [LysW]-aminoadipate/[LysW]-glutamate kinase (249 aa).

Residues arginine 64 and asparagine 166 each coordinate substrate.

This sequence belongs to the acetylglutamate kinase family. LysZ subfamily.

Its subcellular location is the cytoplasm. The enzyme catalyses [amino-group carrier protein]-C-terminal-N-(1,4-dicarboxybutan-1-yl)-L-glutamine + ATP = [amino-group carrier protein]-C-terminal-N-(1-carboxy-5-phosphooxy-5-oxopentan-1-yl)-L-glutamine + ADP. It catalyses the reaction [amino-group carrier protein]-C-terminal-gamma-(L-glutamyl)-L-glutamate + ATP = [amino-group carrier protein]-C-terminal-gamma-(5-phospho-L-glutamyl)-L-glutamate + ADP. Its pathway is amino-acid biosynthesis; L-lysine biosynthesis via AAA pathway; L-lysine from L-alpha-aminoadipate (Thermus route): step 2/5. It participates in amino-acid biosynthesis; L-arginine biosynthesis. Its function is as follows. Involved in both the arginine and lysine biosynthetic pathways. Phosphorylates the LysW-bound precursors glutamate (for arginine biosynthesis), respectively alpha-aminoadipate (for lysine biosynthesis). This is Putative [LysW]-aminoadipate/[LysW]-glutamate kinase from Pyrococcus horikoshii (strain ATCC 700860 / DSM 12428 / JCM 9974 / NBRC 100139 / OT-3).